A 123-amino-acid chain; its full sequence is Protein LLP homolog (123 aa).

Positions 1 to 21 (MAKSLRSKWKRKMRAEKRKKN) are enriched in basic residues. 2 disordered regions span residues 1–22 (MAKS…KKNA) and 61–123 (DLDV…KLAW). Over residues 70 to 89 (ESSKMDTELKRNKKNLRDQH) the composition is skewed to basic and acidic residues. The span at 100–123 (QQKKLKSQCGKKKGKSKQAKKLAW) shows a compositional bias: basic residues.

It belongs to the learning-associated protein family.

It is found in the nucleus. It localises to the nucleolus. The protein resides in the chromosome. In terms of biological role, regulates dendritic and spine growth and synaptic transmission. The protein is Protein LLP homolog (llph) of Xenopus laevis (African clawed frog).